Here is a 394-residue protein sequence, read N- to C-terminus: NAD(P)H-quinone oxidoreductase subunit H (394 aa).

It belongs to the complex I 49 kDa subunit family. As to quaternary structure, NDH-1 can be composed of about 15 different subunits; different subcomplexes with different compositions have been identified which probably have different functions. The initiator methionine has been seen to be kept and removed.

The protein localises to the cellular thylakoid membrane. It catalyses the reaction a plastoquinone + NADH + (n+1) H(+)(in) = a plastoquinol + NAD(+) + n H(+)(out). The enzyme catalyses a plastoquinone + NADPH + (n+1) H(+)(in) = a plastoquinol + NADP(+) + n H(+)(out). NDH-1 shuttles electrons from an unknown electron donor, via FMN and iron-sulfur (Fe-S) centers, to quinones in the respiratory and/or the photosynthetic chain. The immediate electron acceptor for the enzyme in this species is believed to be plastoquinone. Couples the redox reaction to proton translocation, and thus conserves the redox energy in a proton gradient. Cyanobacterial NDH-1 also plays a role in inorganic carbon-concentration. In Synechocystis sp. (strain ATCC 27184 / PCC 6803 / Kazusa), this protein is NAD(P)H-quinone oxidoreductase subunit H (ndhH).